The following is a 372-amino-acid chain: 2-aminoethylphosphonate--pyruvate transaminase 2 (372 aa).

Lys192 is modified (N6-(pyridoxal phosphate)lysine).

It belongs to the class-V pyridoxal-phosphate-dependent aminotransferase family. PhnW subfamily. Homodimer. The cofactor is pyridoxal 5'-phosphate.

The catalysed reaction is (2-aminoethyl)phosphonate + pyruvate = phosphonoacetaldehyde + L-alanine. In terms of biological role, involved in phosphonate degradation. In Polaromonas sp. (strain JS666 / ATCC BAA-500), this protein is 2-aminoethylphosphonate--pyruvate transaminase 2.